The primary structure comprises 428 residues: Serine--tRNA ligase (428 aa).

235-237 (TAE) lines the L-serine pocket. 266-268 (RSE) lines the ATP pocket. Residue Glu-289 participates in L-serine binding. 353-356 (EISS) contributes to the ATP binding site. L-serine is bound at residue Ser-389.

The protein belongs to the class-II aminoacyl-tRNA synthetase family. Type-1 seryl-tRNA synthetase subfamily. Homodimer. The tRNA molecule binds across the dimer.

The protein resides in the cytoplasm. It carries out the reaction tRNA(Ser) + L-serine + ATP = L-seryl-tRNA(Ser) + AMP + diphosphate + H(+). The catalysed reaction is tRNA(Sec) + L-serine + ATP = L-seryl-tRNA(Sec) + AMP + diphosphate + H(+). It functions in the pathway aminoacyl-tRNA biosynthesis; selenocysteinyl-tRNA(Sec) biosynthesis; L-seryl-tRNA(Sec) from L-serine and tRNA(Sec): step 1/1. In terms of biological role, catalyzes the attachment of serine to tRNA(Ser). Is also able to aminoacylate tRNA(Sec) with serine, to form the misacylated tRNA L-seryl-tRNA(Sec), which will be further converted into selenocysteinyl-tRNA(Sec). The chain is Serine--tRNA ligase from Shewanella baltica (strain OS155 / ATCC BAA-1091).